A 1257-amino-acid polypeptide reads, in one-letter code: Protein flightless-1 homolog (1257 aa).

LRR repeat units follow at residues 6-31 (LQFV…VEQM), 32-54 (TQMT…LSRC), 56-77 (NLEH…LSDL), 78-102 (PRLR…IFRM), 103-126 (KDLT…EYAK), 128-148 (SIVL…VCAN), 149-172 (LIDL…IRRL), 174-195 (MLQS…QLPS), 197-221 (TSLS…LDDM), 222-244 (HNLR…LFKL), 246-267 (NLRK…EGEW), 268-290 (ENLE…VVKL), 292-315 (RLTK…IGKL), 316-338 (IQLT…ISRC), 339-361 (VKLQ…IHLL), and 363-384 (DLKV…PNDA). Gelsolin-like repeat units lie at residues 523–600 (MDEA…EEFL), 640–714 (AVEM…PEFW), 759–832 (ELPK…MMFR), and 1168–1243 (EKTV…CRFR).

The protein belongs to the villin/gelsolin family.

Functionally, may play a key role in embryonic cellularization by interacting with both the cytoskeleton and other cellular components. The sequence is that of Protein flightless-1 homolog (fli-1) from Caenorhabditis elegans.